The chain runs to 1033 residues: Calcium-transporting ATPase 12, plasma membrane-type (1033 aa).

Met1 is subject to N-acetylmethionine. The Cytoplasmic portion of the chain corresponds to 1-152; that stretch reads MRDLKEYDYS…NTYHKPPPKG (152 aa). An interaction with calmodulin region spans residues 25 to 36; it reads QRRWRFAYAAIY. Ser37 is subject to Phosphoserine. Residues 153 to 173 traverse the membrane as a helical segment; that stretch reads LLFFVYEAFKDLTILILLVCA. The Lumenal segment spans residues 174–191; sequence IFSLGFGIKEHGIKEGWY. The helical transmembrane segment at 192–212 threads the bilayer; sequence EGGSIFVAVFLVIVVSALSNF. The Cytoplasmic segment spans residues 213-341; it reads RQERQFDKLS…SERTPLQVRL (129 aa). The chain crosses the membrane as a helical span at residues 342 to 361; that stretch reads DTLTSTIGKIGLTVAALVLV. At 362–397 the chain is on the lumenal side; the sequence is VLLVRYFTGNTEKEGKREYNGSKTPVDTVVNSVVRI. Residues 398–415 traverse the membrane as a helical segment; that stretch reads VAAAVTIVVVAIPEGLPL. Topologically, residues 416–806 are cytoplasmic; sequence AVTLTLAYSM…KWGRCVYNNI (391 aa). The active-site 4-aspartylphosphate intermediate is the Asp453. Mg(2+)-binding residues include Asp751 and Asp755. Residues 807–825 form a helical membrane-spanning segment; the sequence is QKFIQFQLTVNVAALVINF. At 826-836 the chain is on the lumenal side; sequence IAAISAGEVPL. Residues 837 to 857 traverse the membrane as a helical segment; that stretch reads TAVQLLWVNLIMDTLGALALA. The Cytoplasmic segment spans residues 858-877; it reads TERPTNELLKRKPVGRTEAL. A helical transmembrane segment spans residues 878–900; that stretch reads ITNVMWRNLLVQSLYQIAVLLIL. The Lumenal portion of the chain corresponds to 901 to 909; that stretch reads QFKGMSIFS. A helical transmembrane segment spans residues 910-930; the sequence is VRKEVKDTLIFNTFVLCQVFN. Residues 931 to 948 are Cytoplasmic-facing; that stretch reads EFNAREMEKKNVFKGLHR. Residues 949 to 970 traverse the membrane as a helical segment; it reads NRLFIGIIAITIVLQVIMVEFL. The Lumenal segment spans residues 971 to 980; sequence KKFADTVRLN. Residues 981–1002 form a helical membrane-spanning segment; it reads GWQWGTCIALASLSWPIGFFTK. Residues 1003–1006 are Cytoplasmic-facing; sequence FIPV.

The protein belongs to the cation transport ATPase (P-type) (TC 3.A.3) family. Type IIB subfamily.

It localises to the membrane. It carries out the reaction Ca(2+)(in) + ATP + H2O = Ca(2+)(out) + ADP + phosphate + H(+). Activated by calmodulin. Functionally, this magnesium-dependent enzyme catalyzes the hydrolysis of ATP coupled with the translocation of calcium from the cytosol out of the cell or into organelles. In Arabidopsis thaliana (Mouse-ear cress), this protein is Calcium-transporting ATPase 12, plasma membrane-type (ACA12).